The chain runs to 76 residues: Acyl carrier protein (76 aa).

The region spanning 1-76 (MSIEERVKKI…SAIDYVQNNQ (76 aa)) is the Carrier domain. Ser-36 is modified (O-(pantetheine 4'-phosphoryl)serine).

This sequence belongs to the acyl carrier protein (ACP) family. In terms of processing, 4'-phosphopantetheine is transferred from CoA to a specific serine of apo-ACP by AcpS. This modification is essential for activity because fatty acids are bound in thioester linkage to the sulfhydryl of the prosthetic group.

It localises to the cytoplasm. It functions in the pathway lipid metabolism; fatty acid biosynthesis. Its function is as follows. Carrier of the growing fatty acid chain in fatty acid biosynthesis. The protein is Acyl carrier protein of Haemophilus influenzae (strain 86-028NP).